The chain runs to 412 residues: Diphosphomevalonate decarboxylase MVD1, peroxisomal (412 aa).

23–26 lines the (R)-5-diphosphomevalonate pocket; it reads YWGK. A Peroxisomal targeting signal PTS2 motif is present at residues 40-48; it reads SVTLDPDHL. (R)-5-diphosphomevalonate is bound by residues arginine 78, 161–166, and threonine 217; that span reads SGSACR.

It belongs to the diphosphomevalonate decarboxylase family. In terms of assembly, homodimer.

The protein localises to the peroxisome. The enzyme catalyses (R)-5-diphosphomevalonate + ATP = isopentenyl diphosphate + ADP + phosphate + CO2. The protein operates within isoprenoid biosynthesis; isopentenyl diphosphate biosynthesis via mevalonate pathway; isopentenyl diphosphate from (R)-mevalonate: step 3/3. In terms of biological role, performs the first committed step in the biosynthesis of isoprene-containing compounds such as sterols and terpenoids. Is specific for (R)-5-diphosphomevalonate (MVAPP). The catalytic efficiency with (R)-5-phosphomevalonate (MVAP) as substrate is 10000-fold lower than for MVAPP. Can complement a yeast mutant defective in MVD activity. The protein is Diphosphomevalonate decarboxylase MVD1, peroxisomal of Arabidopsis thaliana (Mouse-ear cress).